The following is a 253-amino-acid chain: Imidazole glycerol phosphate synthase subunit HisF (253 aa).

Residues Asp-11 and Asp-130 contribute to the active site.

Belongs to the HisA/HisF family. In terms of assembly, heterodimer of HisH and HisF.

The protein localises to the cytoplasm. It catalyses the reaction 5-[(5-phospho-1-deoxy-D-ribulos-1-ylimino)methylamino]-1-(5-phospho-beta-D-ribosyl)imidazole-4-carboxamide + L-glutamine = D-erythro-1-(imidazol-4-yl)glycerol 3-phosphate + 5-amino-1-(5-phospho-beta-D-ribosyl)imidazole-4-carboxamide + L-glutamate + H(+). The protein operates within amino-acid biosynthesis; L-histidine biosynthesis; L-histidine from 5-phospho-alpha-D-ribose 1-diphosphate: step 5/9. In terms of biological role, IGPS catalyzes the conversion of PRFAR and glutamine to IGP, AICAR and glutamate. The HisF subunit catalyzes the cyclization activity that produces IGP and AICAR from PRFAR using the ammonia provided by the HisH subunit. This Desulfitobacterium hafniense (strain DSM 10664 / DCB-2) protein is Imidazole glycerol phosphate synthase subunit HisF.